The following is a 459-amino-acid chain: Eukaryotic translation initiation factor 3 subunit M (459 aa).

The PCI domain maps to 207–384; it reads LDWAQTHVVD…SEFLVHRATY (178 aa). The disordered stretch occupies residues 431 to 459; sequence AAAEGEKGDKNNKGPSERRRAPQEIAAAE. A compositionally biased stretch (basic and acidic residues) spans 434-452; the sequence is EGEKGDKNNKGPSERRRAP.

It belongs to the eIF-3 subunit M family. As to quaternary structure, component of the eukaryotic translation initiation factor 3 (eIF-3) complex.

It localises to the cytoplasm. Functionally, component of the eukaryotic translation initiation factor 3 (eIF-3) complex, which is involved in protein synthesis of a specialized repertoire of mRNAs and, together with other initiation factors, stimulates binding of mRNA and methionyl-tRNAi to the 40S ribosome. The eIF-3 complex specifically targets and initiates translation of a subset of mRNAs involved in cell proliferation. The sequence is that of Eukaryotic translation initiation factor 3 subunit M from Emericella nidulans (strain FGSC A4 / ATCC 38163 / CBS 112.46 / NRRL 194 / M139) (Aspergillus nidulans).